A 448-amino-acid chain; its full sequence is Tubulin beta chain (448 aa).

The GTP site is built by Gln11, Glu69, Ser138, Gly142, Thr143, Gly144, Asn204, and Asn226. Glu69 is a Mg(2+) binding site. The disordered stretch occupies residues 425–448 (YQDAGVDEEEEEYDEEAPVEEPLE). Acidic residues predominate over residues 429–448 (GVDEEEEEYDEEAPVEEPLE).

This sequence belongs to the tubulin family. In terms of assembly, dimer of alpha and beta chains. A typical microtubule is a hollow water-filled tube with an outer diameter of 25 nm and an inner diameter of 15 nM. Alpha-beta heterodimers associate head-to-tail to form protofilaments running lengthwise along the microtubule wall with the beta-tubulin subunit facing the microtubule plus end conferring a structural polarity. Microtubules usually have 13 protofilaments but different protofilament numbers can be found in some organisms and specialized cells. Mg(2+) is required as a cofactor.

It is found in the cytoplasm. It localises to the cytoskeleton. In terms of biological role, tubulin is the major constituent of microtubules, a cylinder consisting of laterally associated linear protofilaments composed of alpha- and beta-tubulin heterodimers. Microtubules grow by the addition of GTP-tubulin dimers to the microtubule end, where a stabilizing cap forms. Below the cap, tubulin dimers are in GDP-bound state, owing to GTPase activity of alpha-tubulin. In Metarhizium anisopliae (Entomophthora anisopliae), this protein is Tubulin beta chain.